A 164-amino-acid chain; its full sequence is HTH-type transcriptional regulator IscR (164 aa).

The region spanning 2–131 is the HTH rrf2-type domain; it reads RLTSKGRYAV…NNITLAELVN (130 aa). A DNA-binding region (H-T-H motif) is located at residues 28–51; that stretch reads LADISERQGISLSYLEQLFSRLRK. 3 residues coordinate [2Fe-2S] cluster: cysteine 92, cysteine 98, and cysteine 104. Residues cysteine 92, cysteine 98, and cysteine 104 each coordinate a metal cation. Residues 145–164 are disordered; sequence DTRRTANGRPQETINVNLRA. The segment covering 152–164 has biased composition (polar residues); that stretch reads GRPQETINVNLRA.

[2Fe-2S] cluster is required as a cofactor.

Its function is as follows. Regulates the transcription of several operons and genes involved in the biogenesis of Fe-S clusters and Fe-S-containing proteins. This chain is HTH-type transcriptional regulator IscR, found in Serratia proteamaculans (strain 568).